Reading from the N-terminus, the 364-residue chain is Dihydroorotate dehydrogenase (quinone) (364 aa).

FMN-binding positions include alanine 78–lysine 82 and threonine 102. A substrate-binding site is contributed by lysine 82. Residue asparagine 127 to phenylalanine 131 coordinates substrate. FMN contacts are provided by asparagine 156 and asparagine 189. Substrate is bound at residue asparagine 189. Residue serine 192 is the Nucleophile of the active site. Asparagine 194 serves as a coordination point for substrate. FMN-binding residues include lysine 227 and threonine 255. Residue asparagine 256–threonine 257 participates in substrate binding. FMN is bound by residues glycine 285, glycine 314, and tyrosine 335 to threonine 336.

Belongs to the dihydroorotate dehydrogenase family. Type 2 subfamily. As to quaternary structure, monomer. FMN is required as a cofactor.

The protein resides in the cell membrane. It catalyses the reaction (S)-dihydroorotate + a quinone = orotate + a quinol. Its pathway is pyrimidine metabolism; UMP biosynthesis via de novo pathway; orotate from (S)-dihydroorotate (quinone route): step 1/1. Catalyzes the conversion of dihydroorotate to orotate with quinone as electron acceptor. The polypeptide is Dihydroorotate dehydrogenase (quinone) (Thermosynechococcus vestitus (strain NIES-2133 / IAM M-273 / BP-1)).